The sequence spans 145 residues: Probable WRKY transcription factor 75 (145 aa).

Positions 20–38 (SKPELHQGEEESSKVRSEG) are enriched in basic and acidic residues. The tract at residues 20–55 (SKPELHQGEEESSKVRSEGCSKSVESSKKKGKKQRY) is disordered. A DNA-binding region (WRKY) is located at residues 61 to 126 (SQVDILDDGY…YEGVHSHPIE (66 aa)).

The protein belongs to the WRKY group II-c family.

The protein resides in the nucleus. Its function is as follows. Transcription factor. Interacts specifically with the W box (5'-(T)TGAC[CT]-3'), a frequently occurring elicitor-responsive cis-acting element. In Arabidopsis thaliana (Mouse-ear cress), this protein is Probable WRKY transcription factor 75 (WRKY75).